The chain runs to 279 residues: Pantothenate synthetase (279 aa).

An ATP-binding site is contributed by 26-33 (MGNLHEGH). Histidine 33 functions as the Proton donor in the catalytic mechanism. (R)-pantoate is bound at residue glutamine 57. Residue glutamine 57 coordinates beta-alanine. 144–147 (GKKD) is a binding site for ATP. (R)-pantoate is bound at residue glutamine 150. ATP contacts are provided by residues valine 173 and 181 to 184 (LSSR).

This sequence belongs to the pantothenate synthetase family. As to quaternary structure, homodimer.

It localises to the cytoplasm. It carries out the reaction (R)-pantoate + beta-alanine + ATP = (R)-pantothenate + AMP + diphosphate + H(+). It functions in the pathway cofactor biosynthesis; (R)-pantothenate biosynthesis; (R)-pantothenate from (R)-pantoate and beta-alanine: step 1/1. Its function is as follows. Catalyzes the condensation of pantoate with beta-alanine in an ATP-dependent reaction via a pantoyl-adenylate intermediate. The polypeptide is Pantothenate synthetase (Burkholderia ambifaria (strain ATCC BAA-244 / DSM 16087 / CCUG 44356 / LMG 19182 / AMMD) (Burkholderia cepacia (strain AMMD))).